A 334-amino-acid chain; its full sequence is Ornithine carbamoyltransferase (334 aa).

Residues 57 to 60 (STRT), Gln84, Arg108, and 135 to 138 (HPTQ) contribute to the carbamoyl phosphate site. L-ornithine is bound by residues Asn168, Asp232, and 236-237 (SM). Residues 274-275 (CL) and Arg321 each bind carbamoyl phosphate.

It belongs to the aspartate/ornithine carbamoyltransferase superfamily. OTCase family.

Its subcellular location is the cytoplasm. The catalysed reaction is carbamoyl phosphate + L-ornithine = L-citrulline + phosphate + H(+). Its pathway is amino-acid degradation; L-arginine degradation via ADI pathway; carbamoyl phosphate from L-arginine: step 2/2. Functionally, reversibly catalyzes the transfer of the carbamoyl group from carbamoyl phosphate (CP) to the N(epsilon) atom of ornithine (ORN) to produce L-citrulline. The polypeptide is Ornithine carbamoyltransferase (Haemophilus influenzae (strain PittGG)).